We begin with the raw amino-acid sequence, 269 residues long: Formamidopyrimidine-DNA glycosylase (269 aa).

P2 acts as the Schiff-base intermediate with DNA in catalysis. Residue E3 is the Proton donor of the active site. Residue K57 is the Proton donor; for beta-elimination activity of the active site. H90, R109, and K150 together coordinate DNA. An FPG-type zinc finger spans residues 235–269 (QVYGREGEPCRVCGTPILAGKHAQRRTYWCRRCQK). The Proton donor; for delta-elimination activity role is filled by R259.

This sequence belongs to the FPG family. Monomer. Zn(2+) is required as a cofactor.

It carries out the reaction Hydrolysis of DNA containing ring-opened 7-methylguanine residues, releasing 2,6-diamino-4-hydroxy-5-(N-methyl)formamidopyrimidine.. The catalysed reaction is 2'-deoxyribonucleotide-(2'-deoxyribose 5'-phosphate)-2'-deoxyribonucleotide-DNA = a 3'-end 2'-deoxyribonucleotide-(2,3-dehydro-2,3-deoxyribose 5'-phosphate)-DNA + a 5'-end 5'-phospho-2'-deoxyribonucleoside-DNA + H(+). In terms of biological role, involved in base excision repair of DNA damaged by oxidation or by mutagenic agents. Acts as a DNA glycosylase that recognizes and removes damaged bases. Has a preference for oxidized purines, such as 7,8-dihydro-8-oxoguanine (8-oxoG). Has AP (apurinic/apyrimidinic) lyase activity and introduces nicks in the DNA strand. Cleaves the DNA backbone by beta-delta elimination to generate a single-strand break at the site of the removed base with both 3'- and 5'-phosphates. This chain is Formamidopyrimidine-DNA glycosylase, found in Cronobacter sakazakii (strain ATCC BAA-894) (Enterobacter sakazakii).